A 369-amino-acid polypeptide reads, in one-letter code: Phospho-N-acetylmuramoyl-pentapeptide-transferase (369 aa).

10 helical membrane-spanning segments follow: residues 2-22, 55-75, 86-106, 122-142, 158-178, 196-216, 239-259, 266-286, 291-311, and 348-368; these read IALL…TPLF, TVVV…MWMM, ALLL…DDFI, LVLQ…FPNA, IPWL…FVLW, LDGL…LMGI, PLDL…FLWW, IFMG…FAIL, LLLA…IIQV, and ILGG…WVVL.

This sequence belongs to the glycosyltransferase 4 family. MraY subfamily. Requires Mg(2+) as cofactor.

It localises to the cell membrane. The enzyme catalyses UDP-N-acetyl-alpha-D-muramoyl-L-alanyl-gamma-D-glutamyl-meso-2,6-diaminopimeloyl-D-alanyl-D-alanine + di-trans,octa-cis-undecaprenyl phosphate = di-trans,octa-cis-undecaprenyl diphospho-N-acetyl-alpha-D-muramoyl-L-alanyl-D-glutamyl-meso-2,6-diaminopimeloyl-D-alanyl-D-alanine + UMP. The protein operates within cell wall biogenesis; peptidoglycan biosynthesis. Its function is as follows. Catalyzes the initial step of the lipid cycle reactions in the biosynthesis of the cell wall peptidoglycan: transfers peptidoglycan precursor phospho-MurNAc-pentapeptide from UDP-MurNAc-pentapeptide onto the lipid carrier undecaprenyl phosphate, yielding undecaprenyl-pyrophosphoryl-MurNAc-pentapeptide, known as lipid I. This Arthrobacter sp. (strain FB24) protein is Phospho-N-acetylmuramoyl-pentapeptide-transferase.